A 145-amino-acid polypeptide reads, in one-letter code: MKLNELKYTPGSKKEATRVGRGMASGKGKTATRGHKGQNSRSGGGVRPGFEGGQTPLFRRLPKVGFTSLNQKQYTILNLSDLETLGLEVINHESLIDHKIIKNSSVLVKILANGTLTKKVDVKVNKISKAAKSAIEKLGGKVEVI.

The interval 1-54 is disordered; that stretch reads MKLNELKYTPGSKKEATRVGRGMASGKGKTATRGHKGQNSRSGGGVRPGFEGGQ. Gly residues predominate over residues 42–52; it reads SGGGVRPGFEG.

It belongs to the universal ribosomal protein uL15 family. In terms of assembly, part of the 50S ribosomal subunit.

Binds to the 23S rRNA. This is Large ribosomal subunit protein uL15 from Mycoplasma capricolum subsp. capricolum (strain California kid / ATCC 27343 / NCTC 10154).